The sequence spans 147 residues: Cysteine proteinase inhibitor 2 (147 aa).

An N-terminal signal peptide occupies residues 1–27; that stretch reads MATMLKVSLVLSLLGFLVIAVVTPSAA. In terms of domain architecture, Cystatin spans 87–117; sequence LQFSRVVSAQKQVVAGLKYYLRIEVTQPNGS. The short motif at 98 to 102 is the Secondary area of contact element; sequence QVVAG. A glycan (N-linked (GlcNAc...) asparagine) is linked at Asn-115.

Belongs to the cystatin family. Phytocystatin subfamily.

It is found in the secreted. Specific inhibitor of cysteine proteinases. Probably involved in the regulation of endogenous processes and in defense against pests and pathogens. This chain is Cysteine proteinase inhibitor 2 (CYS2), found in Arabidopsis thaliana (Mouse-ear cress).